The chain runs to 383 residues: Na(+)/H(+) antiporter NhaA (383 aa).

A run of 11 helical transmembrane segments spans residues 10-30 (LIGG…NNSP), 56-76 (LMHW…GLEI), 91-111 (IITP…IYLS), 121-141 (GWAI…ALLG), 150-170 (LLVI…IAIF), 174-194 (SLSL…IICN), 206-226 (VVLG…ATLA), 254-274 (PWII…ISFS), 289-308 (IIWG…LAVF), 327-347 (GISL…VLAF), and 355-375 (AIKI…YIVL).

Belongs to the NhaA Na(+)/H(+) (TC 2.A.33) antiporter family.

The protein localises to the cell inner membrane. The enzyme catalyses Na(+)(in) + 2 H(+)(out) = Na(+)(out) + 2 H(+)(in). Na(+)/H(+) antiporter that extrudes sodium in exchange for external protons. In Francisella tularensis subsp. tularensis (strain SCHU S4 / Schu 4), this protein is Na(+)/H(+) antiporter NhaA.